The following is a 328-amino-acid chain: Malate dehydrogenase (328 aa).

11–17 (GAAGQIG) contributes to the NAD(+) binding site. Positions 94 and 100 each coordinate substrate. NAD(+)-binding positions include Asn-107, Gln-114, and 131–133 (VGN). Residues Asn-133 and Arg-164 each coordinate substrate. Residue His-189 is the Proton acceptor of the active site.

Belongs to the LDH/MDH superfamily. MDH type 2 family.

It carries out the reaction (S)-malate + NAD(+) = oxaloacetate + NADH + H(+). Functionally, catalyzes the reversible oxidation of malate to oxaloacetate. This chain is Malate dehydrogenase, found in Xanthomonas campestris pv. campestris (strain 8004).